The following is a 212-amino-acid chain: Thymidylate kinase (212 aa).

ATP is bound at residue 10–17 (GLEGAGKT).

The protein belongs to the thymidylate kinase family.

It carries out the reaction dTMP + ATP = dTDP + ADP. Phosphorylation of dTMP to form dTDP in both de novo and salvage pathways of dTTP synthesis. The protein is Thymidylate kinase of Yersinia pseudotuberculosis serotype O:1b (strain IP 31758).